Consider the following 466-residue polypeptide: Ribulose bisphosphate carboxylase large chain (466 aa).

An N6,N6,N6-trimethyllysine modification is found at Lys5. Substrate contacts are provided by Asn114 and Thr164. The active-site Proton acceptor is the Lys166. Lys168 contacts substrate. 3 residues coordinate Mg(2+): Lys192, Asp194, and Glu195. An N6-carboxylysine modification is found at Lys192. The Proton acceptor role is filled by His285. Substrate contacts are provided by Arg286, His318, and Ser370.

The protein belongs to the RuBisCO large chain family. Type I subfamily. In terms of assembly, heterohexadecamer of 8 large chains and 8 small chains; disulfide-linked. The disulfide link is formed within the large subunit homodimers. Mg(2+) serves as cofactor. The disulfide bond which can form in the large chain dimeric partners within the hexadecamer appears to be associated with oxidative stress and protein turnover.

The protein localises to the plastid. It localises to the chloroplast. It catalyses the reaction 2 (2R)-3-phosphoglycerate + 2 H(+) = D-ribulose 1,5-bisphosphate + CO2 + H2O. It carries out the reaction D-ribulose 1,5-bisphosphate + O2 = 2-phosphoglycolate + (2R)-3-phosphoglycerate + 2 H(+). In terms of biological role, ruBisCO catalyzes two reactions: the carboxylation of D-ribulose 1,5-bisphosphate, the primary event in carbon dioxide fixation, as well as the oxidative fragmentation of the pentose substrate in the photorespiration process. Both reactions occur simultaneously and in competition at the same active site. This Drosera binata (Fork-leaved sundew) protein is Ribulose bisphosphate carboxylase large chain.